Here is a 136-residue protein sequence, read N- to C-terminus: Protein PsiE homolog (136 aa).

4 helical membrane passes run 15 to 35 (ILQT…VVFL), 55 to 75 (YELV…ALIV), 82 to 102 (FHFP…RLII), and 108 to 128 (PLDV…LWLC).

It belongs to the PsiE family.

Its subcellular location is the cell inner membrane. In Enterobacter sp. (strain 638), this protein is Protein PsiE homolog.